The chain runs to 111 residues: Cytochrome c (111 aa).

Ala-1 bears the N-acetylalanine mark. Cys-22, Cys-25, and His-26 together coordinate heme c. Position 80 is an N6,N6,N6-trimethyllysine (Lys-80). A heme c-binding site is contributed by Met-88. At Lys-94 the chain carries N6,N6,N6-trimethyllysine.

Belongs to the cytochrome c family. Post-translationally, binds 1 heme c group covalently per subunit.

Its subcellular location is the mitochondrion intermembrane space. In terms of biological role, electron carrier protein. The oxidized form of the cytochrome c heme group can accept an electron from the heme group of the cytochrome c1 subunit of cytochrome reductase. Cytochrome c then transfers this electron to the cytochrome oxidase complex, the final protein carrier in the mitochondrial electron-transport chain. In Cannabis sativa (Hemp), this protein is Cytochrome c.